Here is an 873-residue protein sequence, read N- to C-terminus: Probable beta-glucosidase A (873 aa).

The signal sequence occupies residues 1–19 (MRFGWLEVAALTAASVANA). Residues N71, N222, and N263 are each glycosylated (N-linked (GlcNAc...) asparagine). Residue D291 is part of the active site. N-linked (GlcNAc...) asparagine glycans are attached at residues N326, N333, N365, N453, N534, N553, N575, N679, and N725. Residues 731–764 (DSSDDPNYGWQDSEYIPEGARDGSPQPLLKAGGA) form a disordered region.

It belongs to the glycosyl hydrolase 3 family.

The protein resides in the secreted. The enzyme catalyses Hydrolysis of terminal, non-reducing beta-D-glucosyl residues with release of beta-D-glucose.. Its pathway is glycan metabolism; cellulose degradation. Its function is as follows. Beta-glucosidases are one of a number of cellulolytic enzymes involved in the degradation of cellulosic biomass. Catalyzes the last step releasing glucose from the inhibitory cellobiose. This is Probable beta-glucosidase A (bglA) from Aspergillus fumigatus (strain ATCC MYA-4609 / CBS 101355 / FGSC A1100 / Af293) (Neosartorya fumigata).